The following is a 218-amino-acid chain: Glutathione S-transferase U22 (218 aa).

Position 2 is an N-acetylalanine (alanine 2). One can recognise a GST N-terminal domain in the interval 3-82; the sequence is DEVILLDFWP…YIDEVWSDKN (80 aa). Residues 13 to 14, 39 to 40, 53 to 54, and 66 to 67 contribute to the glutathione site; these read SP, DK, KI, and ES. The 121-residue stretch at 88-208 folds into the GST C-terminal domain; it reads DPYQRAQARF…LHDSEKILAF (121 aa). Threonine 149 is modified (phosphothreonine).

Belongs to the GST superfamily. Tau family.

It is found in the cytoplasm. Its subcellular location is the cytosol. It carries out the reaction RX + glutathione = an S-substituted glutathione + a halide anion + H(+). May be involved in the conjugation of reduced glutathione to a wide number of exogenous and endogenous hydrophobic electrophiles and have a detoxification role against certain herbicides. This is Glutathione S-transferase U22 (GSTU22) from Arabidopsis thaliana (Mouse-ear cress).